A 426-amino-acid polypeptide reads, in one-letter code: Serine protease HTRA2, mitochondrial (426 aa).

Over residues serine 31–asparagine 58 the composition is skewed to low complexity. A disordered region spans residues serine 31–aspartate 59. Residues phenylalanine 71 to glycine 87 form a helical membrane-spanning segment. The IAP-binding signature appears at alanine 79–serine 82. Positions serine 143–leucine 306 are serine protease. Catalysis depends on charge relay system residues histidine 161, aspartate 193, and serine 270. The region spanning methionine 329–valine 414 is the PDZ domain.

It belongs to the peptidase S1C family. In terms of assembly, interacts with th/DIAP1 (via BIR 2 domain).

The protein resides in the mitochondrion intermembrane space. The protein localises to the mitochondrion membrane. It catalyses the reaction Cleavage of non-polar aliphatic amino-acids at the P1 position, with a preference for Val, Ile and Met. At the P2 and P3 positions, Arg is selected most strongly with a secondary preference for other hydrophilic residues.. Its function is as follows. Serine protease that shows proteolytic activity against a non-specific substrate beta-casein. Promotes or induces cell death either by direct binding to and inhibition of BIRC proteins (also called inhibitor of apoptosis proteins, IAPs), leading to an increase in caspase activity, or by a BIRC inhibition-independent, caspase-independent and serine protease activity-dependent mechanism. Can antagonize antiapoptotic activity of th/Diap1 by directly inducing the degradation of th/Diap1. This chain is Serine protease HTRA2, mitochondrial, found in Drosophila grimshawi (Hawaiian fruit fly).